Consider the following 160-residue polypeptide: Small RNA binding protein 1 (160 aa).

The RRM domain maps to 8–86 (FRCFVGGLAW…RNITVNEAQQ (79 aa)). Residues 82 to 160 (NEAQQRGGGG…GGGSEGGWRN (79 aa)) are disordered. Gly residues predominate over residues 87–160 (RGGGGGGGYN…GGGSEGGWRN (74 aa)). The glycine-rich (GR) required for cell-to-cell movement stretch occupies residues 88 to 157 (GGGGGGGYNR…GSGGGGSEGG (70 aa)).

Belongs to the GR-RBP family. In terms of assembly, binds to small phloem-mobile single-stranded RNAs (ss-sRNA, e.g. small interfering RNA (siRNA) and microRNA (miRNA)) in the phloeme exudate, including viral-derived sRNA (vsiRNA). As to expression, accumulates in phloem exudates.

It localises to the secreted. Possibly has a role in RNA transcription or processing during stress. Binds sequence non-specifically to RNAs and DNAs. Mediates cell-to-cell trafficking of RNA interference (RNAi) signals (small RNAs (sRNA), e.g. small interfering RNA (siRNA) and microRNA (miRNA)) which regulate growth and development, as well as responses to environmental inputs, including pathogen attack; can compromise zucchini yellow mosaic virus (ZYMV) and tobacco rattle virus (TRV) infections at the early stage. The polypeptide is Small RNA binding protein 1 (Cucumis sativus (Cucumber)).